The primary structure comprises 1394 residues: Coiled-coil domain-containing protein 7 (1394 aa).

Positions 308-340 form a coiled coil; it reads LLDAEYKQIQRDFELLSEEKLVLENELQKLKDT. The interval 345-375 is disordered; the sequence is STNNRTKKAAKTVKKKDKGKSEDSEKKMSSE. Basic residues predominate over residues 349–362; the sequence is RTKKAAKTVKKKDK. The span at 363 to 375 shows a compositional bias: basic and acidic residues; sequence GKSEDSEKKMSSE. Positions 383–421 form a coiled coil; that stretch reads LDQVQKVARLEIENKVLQEQLKQALQEAEKAKHQLNYFL. Disordered stretches follow at residues 431-617, 634-806, and 819-842; these read EGKT…EVPD, EQMK…LEHQ, and NEKL…PMLK. Polar residues predominate over residues 437-446; the sequence is TMRVGNSQTE. Over residues 447-462 the composition is skewed to basic and acidic residues; that stretch reads VKGEDSKTIPLEKETG. Residues 464–473 show a composition bias toward polar residues; sequence SLVSDSGGQK. Positions 491-500 are enriched in basic and acidic residues; the sequence is LIEKSSEKKR. Polar residues-rich tracts occupy residues 503–513, 521–538, and 546–571; these read PAISDLSQILK, LESS…NKSP, and LTTV…NETV. Positions 583–600 are enriched in basic and acidic residues; sequence ESKKADVSEEQLQKKTEE. Positions 663-679 are enriched in polar residues; it reads SRSQSETKNLEATGNES. Positions 695 to 707 are enriched in basic and acidic residues; the sequence is QDTKSKTEVEVKK. Polar residues predominate over residues 711 to 721; the sequence is FQDNQLNTHNE. Positions 722 to 736 are enriched in basic and acidic residues; sequence VPNERLIVEHQESMS. A compositionally biased stretch (polar residues) spans 780 to 790; that stretch reads KEQSTLKGQRI. Basic and acidic residues-rich tracts occupy residues 791–806 and 830–842; these read TTHE…LEHQ and THGE…PMLK.

Its function is as follows. May play a role in tumorigenesis. This is Coiled-coil domain-containing protein 7 (CCDC7) from Macaca fascicularis (Crab-eating macaque).